The sequence spans 373 residues: SUN domain-containing protein 5 (373 aa).

At 1–103 the chain is on the nuclear side; that stretch reads MPRTRNIGAL…LFCQKVMEKM (103 aa). The chain crosses the membrane as a helical span at residues 104–120; the sequence is GLLVLCVFGFWMFSMHL. Residues 121-373 lie on the Perinuclear space side of the membrane; sequence PSKVEVWQDD…PKDSHLEPLS (253 aa). A coiled-coil region spans residues 136-180; it reads LQSLRMYQEKVRHHTGEIQDLRGSMNQLIAKLQKMEAISDEQKMA. One can recognise an SUN domain in the interval 204 to 362; the sequence is ASIDFEHTSA…YRVRVHGSVT (159 aa).

Probable homotrimer. Interacts with DNAJB13. Highly glycosylated in the Golgi apparatus during spermiogenesis. In terms of tissue distribution, testis-specific, abundantly expressed in spermatocytes and round spermatids.

It is found in the nucleus inner membrane. The protein localises to the golgi apparatus. Plays an essential role in anchoring sperm head to the tail. Is responsible for the attachment of the coupling apparatus to the sperm nuclear envelope. The sequence is that of SUN domain-containing protein 5 (Sun5) from Mus musculus (Mouse).